Here is a 187-residue protein sequence, read N- to C-terminus: Casparian strip membrane protein 5 (187 aa).

Over 1-24 (MKSGQAEIVETSKGIQKSGLMSRR) the chain is Cytoplasmic. Residues 25–45 (IAILEFILRIVAFFNTIGSAI) traverse the membrane as a helical segment. The Extracellular portion of the chain corresponds to 46-74 (LMGTTHETLPFFTQFIRFQAEYNDLPALT). Residues 75–95 (FFVVANAVVSGYLIMSLTLAF) form a helical membrane-spanning segment. Residues 96-107 (VHIVKRKTQNTR) are Cytoplasmic-facing. The helical transmembrane segment at 108-128 (ILLIVLDVAMLGLLSAGASSA) threads the bilayer. The Extracellular segment spans residues 129–161 (AAIVYLAHNGNNKTNWFAICQQFNSFCERISGS). A glycan (N-linked (GlcNAc...) asparagine) is linked at Asn140. The chain crosses the membrane as a helical span at residues 162 to 182 (LIGSFIAVVLLILLILLSAIA). Residues 183–187 (LSRRH) are Cytoplasmic-facing.

It belongs to the Casparian strip membrane proteins (CASP) family. In terms of assembly, homodimer and heterodimers.

The protein localises to the cell membrane. In terms of biological role, regulates membrane-cell wall junctions and localized cell wall deposition. Required for establishment of the Casparian strip membrane domain (CSD) and the subsequent formation of Casparian strips, a cell wall modification of the root endodermis that determines an apoplastic barrier between the intraorganismal apoplasm and the extraorganismal apoplasm and prevents lateral diffusion. In Arabidopsis lyrata subsp. lyrata (Lyre-leaved rock-cress), this protein is Casparian strip membrane protein 5.